Consider the following 1465-residue polypeptide: DNA polymerase III PolC-type (1465 aa).

The region spanning 427 to 583 (YVVFDVETTG…YDAEATGRLL (157 aa)) is the Exonuclease domain.

Belongs to the DNA polymerase type-C family. PolC subfamily.

It localises to the cytoplasm. It catalyses the reaction DNA(n) + a 2'-deoxyribonucleoside 5'-triphosphate = DNA(n+1) + diphosphate. In terms of biological role, required for replicative DNA synthesis. This DNA polymerase also exhibits 3' to 5' exonuclease activity. This is DNA polymerase III PolC-type from Streptococcus pyogenes serotype M6 (strain ATCC BAA-946 / MGAS10394).